The chain runs to 239 residues: Thymidylate kinase (239 aa).

Residue 10-17 (GINGVGKS) coordinates ATP.

The protein belongs to the thymidylate kinase family.

It carries out the reaction dTMP + ATP = dTDP + ADP. It functions in the pathway pyrimidine metabolism; dTTP biosynthesis. Catalyzes the conversion of dTMP to dTDP. The protein is Thymidylate kinase (TMK) of African swine fever virus (isolate Warthog/Namibia/Wart80/1980) (ASFV).